We begin with the raw amino-acid sequence, 509 residues long: Coiled-coil domain-containing protein 181 (509 aa).

Disordered regions lie at residues 27–122 (INDK…EDEE) and 287–368 (LAQV…NEKK). 2 stretches are compositionally biased toward basic and acidic residues: residues 41 to 58 (ACKK…KETE) and 67 to 82 (DPDK…RRND). A compositionally biased stretch (polar residues) spans 319-333 (RIQSAGVSPVTSTYC). Coiled-coil stretches lie at residues 335-377 (SPRQ…VFKA) and 418-488 (LKKK…RSKQ). The segment covering 337–368 (RQKELQKQLERKRERLKREEEQRKLEEENEKK) has biased composition (basic and acidic residues).

The protein belongs to the CCDC181 family. As to quaternary structure, homodimer. Interacts with HOOK1. Interacts with HOOK2. Interacts with HOOK3.

Its subcellular location is the cytoplasm. It is found in the cytoskeleton. The protein resides in the cell projection. It localises to the cilium. The protein localises to the flagellum. In terms of biological role, microtubule-binding protein that localizes to the microtubular manchette of elongating spermatids. This Rattus norvegicus (Rat) protein is Coiled-coil domain-containing protein 181.